Consider the following 59-residue polypeptide: Preprotein translocase subunit SecG (59 aa).

At 1–33 (MARRESSGGSGGLMSSAGLMRYFEAEESAIKID) the chain is on the cytoplasmic side. Residues 34-55 (PKTVIIAAVASGAFIWILNFTY) traverse the membrane as a helical segment. Residues 56-59 (GRFW) are Extracellular-facing.

It belongs to the SEC61-beta family. As to quaternary structure, component of the protein translocase complex. Heterotrimer consisting of alpha (SecY), beta (SecG) and gamma (SecE) subunits. Can form oligomers of the heterotrimer.

Its subcellular location is the cell membrane. Functionally, involved in protein export. The function of the beta subunit is unknown, but it may be involved in stabilization of the trimeric complex. In Methanocella arvoryzae (strain DSM 22066 / NBRC 105507 / MRE50), this protein is Preprotein translocase subunit SecG.